We begin with the raw amino-acid sequence, 488 residues long: Multidrug resistance outer membrane protein MdtP (488 aa).

An N-terminal signal peptide occupies residues 1–23 (MINRQLSRLLLCSILGSTTLISG). Cys-24 carries the N-palmitoyl cysteine lipid modification. Cys-24 carries the S-diacylglycerol cysteine lipid modification.

It belongs to the outer membrane factor (OMF) (TC 1.B.17) family. In terms of assembly, could be part of a tripartite efflux system composed of MdtN, MdtO and MdtP.

Its subcellular location is the cell outer membrane. Functionally, could be involved in resistance to puromycin, acriflavine and tetraphenylarsonium chloride. In Escherichia coli (strain K12), this protein is Multidrug resistance outer membrane protein MdtP (mdtP).